A 290-amino-acid chain; its full sequence is Light-independent protochlorophyllide reductase iron-sulfur ATP-binding protein (290 aa).

ATP is bound by residues Gly10 to Thr15 and Lys39. A Mg(2+)-binding site is contributed by Ser14. Positions 95 and 129 each coordinate [4Fe-4S] cluster. Asn180–Arg181 is a binding site for ATP.

This sequence belongs to the NifH/BchL/ChlL family. Homodimer. Protochlorophyllide reductase is composed of three subunits; ChlL, ChlN and ChlB. [4Fe-4S] cluster serves as cofactor.

It localises to the plastid. The protein resides in the chloroplast. The enzyme catalyses chlorophyllide a + oxidized 2[4Fe-4S]-[ferredoxin] + 2 ADP + 2 phosphate = protochlorophyllide a + reduced 2[4Fe-4S]-[ferredoxin] + 2 ATP + 2 H2O. It functions in the pathway porphyrin-containing compound metabolism; chlorophyll biosynthesis (light-independent). Functionally, component of the dark-operative protochlorophyllide reductase (DPOR) that uses Mg-ATP and reduced ferredoxin to reduce ring D of protochlorophyllide (Pchlide) to form chlorophyllide a (Chlide). This reaction is light-independent. The L component serves as a unique electron donor to the NB-component of the complex, and binds Mg-ATP. The polypeptide is Light-independent protochlorophyllide reductase iron-sulfur ATP-binding protein (Porphyra purpurea (Red seaweed)).